The chain runs to 297 residues: ClpXP adapter protein SpxH (297 aa).

The protein belongs to the SpxH family. Interacts with Spx.

The protein resides in the cytoplasm. Adapter protein required for efficient degradation of Spx by ClpXP under non-stress conditions. Interaction with Spx stabilizes Spx and exposes the C-terminus of Spx for recognition and proteolysis by ClpXP. In Bacillus cereus (strain ZK / E33L), this protein is ClpXP adapter protein SpxH.